A 346-amino-acid chain; its full sequence is MPQDVLLGKSLPELTDWIETTGQPAYRGKQLYNWLYQKGIHDLSEITVFPKAWREQMGTYPVGRSQIHHQRTAPDGTRKYLLQLHDGLIIETVGIPTEKRLTVCVSSQVGCAMACDFCATGKSGFTRHLQAHEIIDQVLTVQTDFQQRVSHVVFMGMGEPLANLEQVLKSIQSLNQDIGIGQRSLTVSTVGVPDQIRALAQQNLQITLAVSLHAPNQALRESIIPTAVHYPIEALLDECREYVAITRRRLSFEYILLAGVNDLPDHAAELAKKLKGFQSHVNLIPYNPITEVPFQRPGKKRINVFKQILQDHKIAVSVRYSKGLEADAACGQLRSNLRRSAPATVK.

The Proton acceptor role is filled by Glu-91. One can recognise a Radical SAM core domain in the interval 97–325; the sequence is TEKRLTVCVS…VSVRYSKGLE (229 aa). Cys-104 and Cys-330 are joined by a disulfide. The [4Fe-4S] cluster site is built by Cys-111, Cys-115, and Cys-118. S-adenosyl-L-methionine contacts are provided by residues 158–159, Ser-188, 211–213, and Asn-287; these read GE and SLH. Catalysis depends on Cys-330, which acts as the S-methylcysteine intermediate.

Belongs to the radical SAM superfamily. RlmN family. [4Fe-4S] cluster serves as cofactor.

It is found in the cytoplasm. It carries out the reaction adenosine(2503) in 23S rRNA + 2 reduced [2Fe-2S]-[ferredoxin] + 2 S-adenosyl-L-methionine = 2-methyladenosine(2503) in 23S rRNA + 5'-deoxyadenosine + L-methionine + 2 oxidized [2Fe-2S]-[ferredoxin] + S-adenosyl-L-homocysteine. It catalyses the reaction adenosine(37) in tRNA + 2 reduced [2Fe-2S]-[ferredoxin] + 2 S-adenosyl-L-methionine = 2-methyladenosine(37) in tRNA + 5'-deoxyadenosine + L-methionine + 2 oxidized [2Fe-2S]-[ferredoxin] + S-adenosyl-L-homocysteine. Its function is as follows. Specifically methylates position 2 of adenine 2503 in 23S rRNA and position 2 of adenine 37 in tRNAs. The chain is Probable dual-specificity RNA methyltransferase RlmN from Picosynechococcus sp. (strain ATCC 27264 / PCC 7002 / PR-6) (Agmenellum quadruplicatum).